A 210-amino-acid polypeptide reads, in one-letter code: Small ribosomal subunit protein uS4 (210 aa).

In terms of domain architecture, S4 RNA-binding spans 100–160 (GRLDNVVYRM…EKSKNQLRVK (61 aa)).

Belongs to the universal ribosomal protein uS4 family. In terms of assembly, part of the 30S ribosomal subunit. Contacts protein S5. The interaction surface between S4 and S5 is involved in control of translational fidelity.

One of the primary rRNA binding proteins, it binds directly to 16S rRNA where it nucleates assembly of the body of the 30S subunit. In terms of biological role, with S5 and S12 plays an important role in translational accuracy. The sequence is that of Small ribosomal subunit protein uS4 from Alcanivorax borkumensis (strain ATCC 700651 / DSM 11573 / NCIMB 13689 / SK2).